The following is a 701-amino-acid chain: Polyribonucleotide nucleotidyltransferase (701 aa).

2 residues coordinate Mg(2+): Asp-487 and Asp-493. Positions Pro-554–Val-613 constitute a KH domain. Residues Gly-623–Lys-691 form the S1 motif domain.

The protein belongs to the polyribonucleotide nucleotidyltransferase family. As to quaternary structure, component of the RNA degradosome, which is a multiprotein complex involved in RNA processing and mRNA degradation. It depends on Mg(2+) as a cofactor.

Its subcellular location is the cytoplasm. It catalyses the reaction RNA(n+1) + phosphate = RNA(n) + a ribonucleoside 5'-diphosphate. Its function is as follows. Involved in mRNA degradation. Catalyzes the phosphorolysis of single-stranded polyribonucleotides processively in the 3'- to 5'-direction. This is Polyribonucleotide nucleotidyltransferase from Pseudomonas fluorescens (strain SBW25).